We begin with the raw amino-acid sequence, 227 residues long: Fibrillarin-like rRNA/tRNA 2'-O-methyltransferase (227 aa).

Residues 86–87 (TT), 105–106 (EF), 130–131 (DA), and 150–153 (DVAQ) each bind S-adenosyl-L-methionine.

This sequence belongs to the methyltransferase superfamily. Fibrillarin family. In terms of assembly, interacts with nop5. Component of box C/D small ribonucleoprotein (sRNP) particles that contain rpl7ae, FlpA and nop5, plus a guide RNA.

Involved in pre-rRNA and tRNA processing. Utilizes the methyl donor S-adenosyl-L-methionine to catalyze the site-specific 2'-hydroxyl methylation of ribose moieties in rRNA and tRNA. Site specificity is provided by a guide RNA that base pairs with the substrate. Methylation occurs at a characteristic distance from the sequence involved in base pairing with the guide RNA. In Pyrococcus horikoshii (strain ATCC 700860 / DSM 12428 / JCM 9974 / NBRC 100139 / OT-3), this protein is Fibrillarin-like rRNA/tRNA 2'-O-methyltransferase.